Reading from the N-terminus, the 200-residue chain is Molybdenum cofactor guanylyltransferase (200 aa).

GTP contacts are provided by residues 10 to 12 (LAG), Lys-23, Asn-51, Asp-69, and Asp-99. Asp-99 provides a ligand contact to Mg(2+).

This sequence belongs to the MobA family. As to quaternary structure, monomer. Requires Mg(2+) as cofactor.

It localises to the cytoplasm. The enzyme catalyses Mo-molybdopterin + GTP + H(+) = Mo-molybdopterin guanine dinucleotide + diphosphate. Transfers a GMP moiety from GTP to Mo-molybdopterin (Mo-MPT) cofactor (Moco or molybdenum cofactor) to form Mo-molybdopterin guanine dinucleotide (Mo-MGD) cofactor. The sequence is that of Molybdenum cofactor guanylyltransferase from Shewanella halifaxensis (strain HAW-EB4).